We begin with the raw amino-acid sequence, 454 residues long: Bifunctional protein GlmU (454 aa).

Residues 1–228 (MTLPLHVVIL…PQDVEGANDP (228 aa)) form a pyrophosphorylase region. Residues 10–13 (LAAG), Lys-24, Gln-76, 81–82 (GT), 103–105 (YGD), Gly-138, Glu-153, Asn-168, and Asn-226 each bind UDP-N-acetyl-alpha-D-glucosamine. Asp-105 lines the Mg(2+) pocket. Asn-226 provides a ligand contact to Mg(2+). Residues 229-249 (WQLAQLERAWQLRAARALCLQ) form a linker region. The tract at residues 250 to 454 (GVRMADPARV…IEGWERPKKK (205 aa)) is N-acetyltransferase. Arg-332 and Lys-350 together coordinate UDP-N-acetyl-alpha-D-glucosamine. The Proton acceptor role is filled by His-362. Tyr-365 and Asn-376 together coordinate UDP-N-acetyl-alpha-D-glucosamine. Acetyl-CoA is bound by residues Ala-379, 385-386 (NY), Ser-404, Ala-422, and Arg-439.

It in the N-terminal section; belongs to the N-acetylglucosamine-1-phosphate uridyltransferase family. The protein in the C-terminal section; belongs to the transferase hexapeptide repeat family. In terms of assembly, homotrimer. Mg(2+) serves as cofactor.

It is found in the cytoplasm. The enzyme catalyses alpha-D-glucosamine 1-phosphate + acetyl-CoA = N-acetyl-alpha-D-glucosamine 1-phosphate + CoA + H(+). The catalysed reaction is N-acetyl-alpha-D-glucosamine 1-phosphate + UTP + H(+) = UDP-N-acetyl-alpha-D-glucosamine + diphosphate. It functions in the pathway nucleotide-sugar biosynthesis; UDP-N-acetyl-alpha-D-glucosamine biosynthesis; N-acetyl-alpha-D-glucosamine 1-phosphate from alpha-D-glucosamine 6-phosphate (route II): step 2/2. Its pathway is nucleotide-sugar biosynthesis; UDP-N-acetyl-alpha-D-glucosamine biosynthesis; UDP-N-acetyl-alpha-D-glucosamine from N-acetyl-alpha-D-glucosamine 1-phosphate: step 1/1. It participates in bacterial outer membrane biogenesis; LPS lipid A biosynthesis. Catalyzes the last two sequential reactions in the de novo biosynthetic pathway for UDP-N-acetylglucosamine (UDP-GlcNAc). The C-terminal domain catalyzes the transfer of acetyl group from acetyl coenzyme A to glucosamine-1-phosphate (GlcN-1-P) to produce N-acetylglucosamine-1-phosphate (GlcNAc-1-P), which is converted into UDP-GlcNAc by the transfer of uridine 5-monophosphate (from uridine 5-triphosphate), a reaction catalyzed by the N-terminal domain. The chain is Bifunctional protein GlmU from Xanthomonas campestris pv. campestris (strain 8004).